The sequence spans 740 residues: Polyribonucleotide nucleotidyltransferase (740 aa).

Positions 492 and 498 each coordinate Mg(2+). A KH domain is found at 559-618 (PMVQTLEIQKEKIRDVIGLGGKVIKELCKTFDVEIDISENGEVKVWGNVGENVKKAVQSI). Positions 628–696 (GDIFDGEVVK…HKNRVKLTLR (69 aa)) constitute an S1 motif domain.

The protein belongs to the polyribonucleotide nucleotidyltransferase family. Mg(2+) is required as a cofactor.

The protein resides in the cytoplasm. It catalyses the reaction RNA(n+1) + phosphate = RNA(n) + a ribonucleoside 5'-diphosphate. Functionally, involved in mRNA degradation. Catalyzes the phosphorolysis of single-stranded polyribonucleotides processively in the 3'- to 5'-direction. This is Polyribonucleotide nucleotidyltransferase from Orientia tsutsugamushi (strain Boryong) (Rickettsia tsutsugamushi).